The primary structure comprises 373 residues: tRNA-specific 2-thiouridylase MnmA (373 aa).

ATP is bound by residues 12–19 (GMSGGVDS) and Met38. Residues 98–100 (NPD) are interaction with target base in tRNA. Cys103 (nucleophile) is an active-site residue. Cys103 and Cys200 are disulfide-bonded. Gly127 provides a ligand contact to ATP. Residues 150–152 (KDQ) are interaction with tRNA. Residue Cys200 is the Cysteine persulfide intermediate of the active site. The interaction with tRNA stretch occupies residues 312-313 (RY).

It belongs to the MnmA/TRMU family.

The protein localises to the cytoplasm. It carries out the reaction S-sulfanyl-L-cysteinyl-[protein] + uridine(34) in tRNA + AH2 + ATP = 2-thiouridine(34) in tRNA + L-cysteinyl-[protein] + A + AMP + diphosphate + H(+). Catalyzes the 2-thiolation of uridine at the wobble position (U34) of tRNA, leading to the formation of s(2)U34. The polypeptide is tRNA-specific 2-thiouridylase MnmA (Streptococcus pyogenes serotype M2 (strain MGAS10270)).